A 405-amino-acid chain; its full sequence is Acetate kinase (405 aa).

A Mg(2+)-binding site is contributed by Asn7. Lys14 is a binding site for ATP. Substrate is bound at residue Arg92. Catalysis depends on Asp149, which acts as the Proton donor/acceptor. ATP contacts are provided by residues 209 to 213 and 284 to 286; these read HLGNG and DMR. Residue Glu389 coordinates Mg(2+).

This sequence belongs to the acetokinase family. In terms of assembly, homodimer. Mg(2+) is required as a cofactor. The cofactor is Mn(2+).

The protein localises to the cytoplasm. It catalyses the reaction acetate + ATP = acetyl phosphate + ADP. It participates in metabolic intermediate biosynthesis; acetyl-CoA biosynthesis; acetyl-CoA from acetate: step 1/2. Functionally, catalyzes the formation of acetyl phosphate from acetate and ATP. Can also catalyze the reverse reaction. This Borreliella burgdorferi (strain ZS7) (Borrelia burgdorferi) protein is Acetate kinase.